A 208-amino-acid chain; its full sequence is Ribosomal RNA small subunit methyltransferase G (208 aa).

Residues Gly78, Phe83, 101–103 (ERS), 129–130 (IE), and Arg142 contribute to the S-adenosyl-L-methionine site.

Belongs to the methyltransferase superfamily. RNA methyltransferase RsmG family.

Its subcellular location is the cytoplasm. Specifically methylates the N7 position of a guanine in 16S rRNA. This chain is Ribosomal RNA small subunit methyltransferase G, found in Borreliella burgdorferi (strain ATCC 35210 / DSM 4680 / CIP 102532 / B31) (Borrelia burgdorferi).